A 329-amino-acid chain; its full sequence is GDP-mannose transporter (329 aa).

Over M1 to S11 the chain is Cytoplasmic. The helical transmembrane segment at L12 to V32 threads the bilayer. At T33–G40 the chain is on the lumenal side. Residues V41–I61 traverse the membrane as a helical segment. At S62–W83 the chain is on the cytoplasmic side. Residues F84 to L104 form a helical membrane-spanning segment. At S105–P107 the chain is on the lumenal side. The chain crosses the membrane as a helical span at residues I108–F128. Residues G129–R131 are Cytoplasmic-facing. The chain crosses the membrane as a helical span at residues V132–Y152. Residues G153 to N163 are Lumenal-facing. A helical membrane pass occupies residues F164–F184. The Cytoplasmic segment spans residues M185 to D196. A helical transmembrane segment spans residues F197–T217. Over T218 to A237 the chain is Lumenal. Residues V238–W258 form a helical membrane-spanning segment. Over C259–T266 the chain is Cytoplasmic. Residues T267 to F287 form a helical membrane-spanning segment. At K288 to P290 the chain is on the lumenal side. Residues I291–I311 form a helical membrane-spanning segment. Residues A312 to S329 are Cytoplasmic-facing.

This sequence belongs to the TPT transporter family. SLC35D subfamily. As to quaternary structure, homooligomer.

It is found in the golgi apparatus membrane. It localises to the cytoplasmic vesicle membrane. The protein resides in the endoplasmic reticulum membrane. Its function is as follows. Involved in the import of GDP-mannose from the cytoplasm into the Golgi lumen. This Komagataella pastoris (Yeast) protein is GDP-mannose transporter (VIG4).